A 93-amino-acid chain; its full sequence is Large ribosomal subunit protein uL23cy (93 aa).

The protein belongs to the universal ribosomal protein uL23 family. As to quaternary structure, part of the 50S ribosomal subunit.

The protein resides in the plastid. Its subcellular location is the chloroplast. Binds to 23S rRNA. The sequence is that of Large ribosomal subunit protein uL23cy (rpl23-B) from Agrostis stolonifera (Creeping bentgrass).